The sequence spans 352 residues: Fe(3+) ions import ATP-binding protein FbpC (352 aa).

In terms of domain architecture, ABC transporter spans L5–I239. G37–T44 contributes to the ATP binding site.

The protein belongs to the ABC transporter superfamily. Fe(3+) ion importer (TC 3.A.1.10) family. The complex is composed of two ATP-binding proteins (FbpC), two transmembrane proteins (FbpB) and a solute-binding protein (FbpA).

It is found in the cell inner membrane. It catalyses the reaction Fe(3+)(out) + ATP + H2O = Fe(3+)(in) + ADP + phosphate + H(+). In terms of biological role, part of the ABC transporter complex FbpABC involved in Fe(3+) ions import. Responsible for energy coupling to the transport system. The sequence is that of Fe(3+) ions import ATP-binding protein FbpC from Neisseria gonorrhoeae.